The primary structure comprises 173 residues: Small ribosomal subunit protein uS9 (173 aa).

The tract at residues 20–53 (SYTTESEVPVEGEYTSESVASRFGEPQPAAGLGR) is disordered.

Belongs to the universal ribosomal protein uS9 family.

This Streptomyces avermitilis (strain ATCC 31267 / DSM 46492 / JCM 5070 / NBRC 14893 / NCIMB 12804 / NRRL 8165 / MA-4680) protein is Small ribosomal subunit protein uS9.